Reading from the N-terminus, the 214-residue chain is tRNA (guanine-N(7)-)-methyltransferase (214 aa).

4 residues coordinate S-adenosyl-L-methionine: E44, E69, D96, and D118. D118 is an active-site residue. Substrate-binding positions include K122, D154, and T191–E194.

The protein belongs to the class I-like SAM-binding methyltransferase superfamily. TrmB family.

The enzyme catalyses guanosine(46) in tRNA + S-adenosyl-L-methionine = N(7)-methylguanosine(46) in tRNA + S-adenosyl-L-homocysteine. It participates in tRNA modification; N(7)-methylguanine-tRNA biosynthesis. Functionally, catalyzes the formation of N(7)-methylguanine at position 46 (m7G46) in tRNA. In Listeria welshimeri serovar 6b (strain ATCC 35897 / DSM 20650 / CCUG 15529 / CIP 8149 / NCTC 11857 / SLCC 5334 / V8), this protein is tRNA (guanine-N(7)-)-methyltransferase.